A 574-amino-acid chain; its full sequence is Sulfate adenylyltransferase (574 aa).

Residues 1-170 are N-terminal; sequence MANTPHGGVL…LEAINRLEHY (170 aa). Residues 171–395 are catalytic; sequence DFLDLRFTPS…LREENPLPAE (225 aa). Q198 contributes to the sulfate binding site. ATP is bound by residues 198 to 201 and 292 to 295; these read QTRN and GRDH. Catalysis depends on residues T199, R200, and N201. Sulfate is bound at residue R200. A296 is a sulfate binding site. Residue M334 participates in ATP binding. Residues 396-574 are allosteric regulation domain; adenylyl-sulfate kinase-like; it reads KGFTVFMTGY…LESNGLLDRL (179 aa). Residues 435 to 438, R452, 478 to 479, and K516 each bind 3'-phosphoadenylyl sulfate; these read ENVR and IA.

It in the N-terminal section; belongs to the sulfate adenylyltransferase family. The protein in the C-terminal section; belongs to the APS kinase family. In terms of assembly, homohexamer. Dimer of trimers.

Its subcellular location is the cytoplasm. It carries out the reaction sulfate + ATP + H(+) = adenosine 5'-phosphosulfate + diphosphate. The protein operates within sulfur metabolism; hydrogen sulfide biosynthesis; sulfite from sulfate: step 1/3. Allosterically inhibited by 3'-phosphoadenosine 5'-phosphosulfate (PAPS). Functionally, catalyzes the first intracellular reaction of sulfate assimilation, forming adenosine-5'-phosphosulfate (APS) from inorganic sulfate and ATP. Plays an important role in sulfate activation as a component of the biosynthesis pathway of sulfur-containing amino acids. The polypeptide is Sulfate adenylyltransferase (Gibberella zeae (strain ATCC MYA-4620 / CBS 123657 / FGSC 9075 / NRRL 31084 / PH-1) (Wheat head blight fungus)).